A 239-amino-acid polypeptide reads, in one-letter code: ATP-dependent dethiobiotin synthetase BioD (239 aa).

15–20 (EIGKTF) is a binding site for ATP. Thr19 provides a ligand contact to Mg(2+). The active site involves Lys40. Residues Asp57, 118 to 121 (EGAG), and 178 to 179 (NH) contribute to the ATP site. The Mg(2+) site is built by Asp57 and Glu118.

This sequence belongs to the dethiobiotin synthetase family. In terms of assembly, homodimer. The cofactor is Mg(2+).

It localises to the cytoplasm. It catalyses the reaction (7R,8S)-7,8-diammoniononanoate + CO2 + ATP = (4R,5S)-dethiobiotin + ADP + phosphate + 3 H(+). It participates in cofactor biosynthesis; biotin biosynthesis; biotin from 7,8-diaminononanoate: step 1/2. Its function is as follows. Catalyzes a mechanistically unusual reaction, the ATP-dependent insertion of CO2 between the N7 and N8 nitrogen atoms of 7,8-diaminopelargonic acid (DAPA, also called 7,8-diammoniononanoate) to form a ureido ring. This is ATP-dependent dethiobiotin synthetase BioD from Burkholderia lata (strain ATCC 17760 / DSM 23089 / LMG 22485 / NCIMB 9086 / R18194 / 383).